The sequence spans 117 residues: uncharacterized protein (117 aa).

The next 4 membrane-spanning stretches (helical) occupy residues 3–23 (AVPI…NILL), 40–60 (FLTP…LLFA), 66–86 (LEVS…LIIA), and 94–114 (PFHL…IFLA).

It to E.coli and S.aureus ethidium bromide resistance proteins (ebr/QacC/EmrE/MvrC).

The protein localises to the cell membrane. This is an uncharacterized protein from Sinorhizobium fredii (strain NBRC 101917 / NGR234).